A 61-amino-acid polypeptide reads, in one-letter code: UPF0434 protein Pput_3813 (61 aa).

Belongs to the UPF0434 family.

The polypeptide is UPF0434 protein Pput_3813 (Pseudomonas putida (strain ATCC 700007 / DSM 6899 / JCM 31910 / BCRC 17059 / LMG 24140 / F1)).